Here is an 804-residue protein sequence, read N- to C-terminus: Cas scaffolding protein family member 4 (804 aa).

In terms of domain architecture, SH3 spans Pro-11–Glu-73. Phosphoserine occurs at positions 200 and 297. 3 disordered regions span residues Leu-369–Arg-395, Gln-607–Ser-628, and Gln-642–Lys-686. Residues Pro-380–Ser-390 are compositionally biased toward polar residues. Residues Glu-649–Asp-664 are compositionally biased toward basic and acidic residues.

The protein belongs to the CAS family. Interacts (via SH3 domain) with PTK2/FAK1 (via C-terminus). Phosphorylated on tyrosines by SRC.

It localises to the cytoplasm. The protein localises to the cytoskeleton. It is found in the cell junction. Its subcellular location is the focal adhesion. In terms of biological role, docking protein that plays a role in tyrosine kinase-based signaling related to cell adhesion and cell spreading. Regulates PTK2/FAK1 activity, focal adhesion integrity, and cell spreading. The chain is Cas scaffolding protein family member 4 from Mus musculus (Mouse).